The following is a 365-amino-acid chain: UDP-galactose transporter homolog 1 (365 aa).

The next 2 membrane-spanning stretches (helical) occupy residues 42–62 (IIDL…WAVL) and 80–100 (ASLV…YAYL). N-linked (GlcNAc...) asparagine glycosylation is present at Asn-115. 2 helical membrane-spanning segments follow: residues 182–202 (YAVV…HAAP) and 206–226 (SGAG…SMLL). A glycan (N-linked (GlcNAc...) asparagine) is linked at Asn-231. Helical transmembrane passes span 249 to 269 (VMCG…LTFS), 289 to 309 (DIVL…QTLE), 315 to 335 (VLVT…VVWF), and 339 to 359 (LTLG…FEAW).

Belongs to the nucleotide-sugar transporter family. SLC35B subfamily.

Its subcellular location is the endoplasmic reticulum membrane. May be involved in specific transport of UDP-Gal from the cytosol to the Golgi lumen. Involved in the maintenance of optimal conditions for the folding of secretory pathway proteins in the endoplasmic reticulum. This chain is UDP-galactose transporter homolog 1 (HUT1), found in Yarrowia lipolytica (strain CLIB 122 / E 150) (Yeast).